A 339-amino-acid chain; its full sequence is Glycerol-3-phosphate dehydrogenase [NAD(P)+] (339 aa).

NADPH contacts are provided by S31, W32, R52, and K122. Sn-glycerol 3-phosphate is bound by residues K122 and G152. A156 is an NADPH binding site. K207, D260, S270, R271, and N272 together coordinate sn-glycerol 3-phosphate. The active-site Proton acceptor is the K207. R271 contributes to the NADPH binding site. An NADPH-binding site is contributed by E293.

It belongs to the NAD-dependent glycerol-3-phosphate dehydrogenase family.

Its subcellular location is the cytoplasm. It catalyses the reaction sn-glycerol 3-phosphate + NAD(+) = dihydroxyacetone phosphate + NADH + H(+). The enzyme catalyses sn-glycerol 3-phosphate + NADP(+) = dihydroxyacetone phosphate + NADPH + H(+). It functions in the pathway membrane lipid metabolism; glycerophospholipid metabolism. Functionally, catalyzes the reduction of the glycolytic intermediate dihydroxyacetone phosphate (DHAP) to sn-glycerol 3-phosphate (G3P), the key precursor for phospholipid synthesis. The polypeptide is Glycerol-3-phosphate dehydrogenase [NAD(P)+] (Tropheryma whipplei (strain Twist) (Whipple's bacillus)).